Here is a 363-residue protein sequence, read N- to C-terminus: MNKRKILVPLGNKSYEVTIEAGILNNISEELLKIGITKNRKILVISNEEISNFYGEKFLNDLKDNKFQVQMFLIKAGESYKNLKTLSEIYDVAFEFGLDRNSIIIALGGGIVGDVSGFAAATWLRGIEYIQIPTTLLSMVDSSVGGKTGVNHPKGKNLIGAFNQPKAVFIDPETLKSLPKREFSAGMAEVIKYGVIRDKELFEYLEIEKNKNELINLKNEYLIKIINSSIKTKSYIVSQDEHENGVRAILNYGHSFGHVIENLCGYGKFLHGEAISIGMNIAGEIAIDKGLWSKEELERQKNLLKSYDLPTEIPKINKEDVLTILMGDKKVRNGKMRFILPKEIGVVDIYDDVEDALFLKFFS.

Residues 134-135 (TT), Lys-147, and Lys-156 each bind NAD(+). Zn(2+) is bound by residues Glu-189, His-254, and His-271.

It belongs to the sugar phosphate cyclases superfamily. Dehydroquinate synthase family. The cofactor is Co(2+). It depends on Zn(2+) as a cofactor. NAD(+) serves as cofactor.

It localises to the cytoplasm. It catalyses the reaction 7-phospho-2-dehydro-3-deoxy-D-arabino-heptonate = 3-dehydroquinate + phosphate. It functions in the pathway metabolic intermediate biosynthesis; chorismate biosynthesis; chorismate from D-erythrose 4-phosphate and phosphoenolpyruvate: step 2/7. Catalyzes the conversion of 3-deoxy-D-arabino-heptulosonate 7-phosphate (DAHP) to dehydroquinate (DHQ). In Prochlorococcus marinus (strain MIT 9312), this protein is 3-dehydroquinate synthase.